We begin with the raw amino-acid sequence, 127 residues long: Large ribosomal subunit protein bL17 (127 aa).

This sequence belongs to the bacterial ribosomal protein bL17 family. In terms of assembly, part of the 50S ribosomal subunit. Contacts protein L32.

This Actinobacillus pleuropneumoniae serotype 7 (strain AP76) protein is Large ribosomal subunit protein bL17.